The sequence spans 471 residues: MDKPRVRFAPSPTGYLHIGGARTALFNWLWARRNGGTFVLRIEDTDRERSTQAAVDAIFDGLRWLGLDWDEGPDVGGPHGPYFQTQRLEIYKTHAEKLIREGKAYACYCTKDVLDAQRKQAEAEKRQFRYPGTCRELPYDPSRPHVIRFRVPQTGSKTFVDLVKGPIETPYEVLQDEVILRGDGVPLYNFGAVVDDVTMAINLVARGDDHVNNTARQILMYEALGYPAPRFAHLPMILGADKTRLSKRHGATSVTAYRDMGYLPEAVVNYLVRLGWSHGDQELFTRDELVRFFDFKDVGATAGVFNQDKMAWVNHEWLKKLSDEELARRALPYFQAAGLPAADDAKLRHVCAVARERARTFGEYVQQFRYFYAPVQLDPKAKDKFLTQDTRPILEAIRAGIAALEALETAALEKLFHDEAAKRGLGLGKVAQPVRVALTGGTASPGMYDVLQILGKDEALRRLDDALRIIG.

The short motif at 10–20 is the 'HIGH' region element; sequence PSPTGYLHIGG. Cys-107, Cys-109, Cys-134, and Glu-136 together coordinate Zn(2+). A 'KMSKS' region motif is present at residues 244-248; that stretch reads RLSKR. Lys-247 is an ATP binding site.

The protein belongs to the class-I aminoacyl-tRNA synthetase family. Glutamate--tRNA ligase type 1 subfamily. In terms of assembly, monomer. It depends on Zn(2+) as a cofactor.

It is found in the cytoplasm. The catalysed reaction is tRNA(Glu) + L-glutamate + ATP = L-glutamyl-tRNA(Glu) + AMP + diphosphate. Its function is as follows. Catalyzes the attachment of glutamate to tRNA(Glu) in a two-step reaction: glutamate is first activated by ATP to form Glu-AMP and then transferred to the acceptor end of tRNA(Glu). This Anaeromyxobacter sp. (strain Fw109-5) protein is Glutamate--tRNA ligase.